Consider the following 390-residue polypeptide: MNKTNPTIALVAGEVSGDILGAGLIRQLKAHYPNARFIGIAGTRMLAEGCKTLVDMEELSVMGLAEILKHLPRLLKIRKNVIQTMLQEKPDVYIGIDAPDFNLDVELKLKANGIKTIHYVSPSVWAWRQNRIHKIAKATHQVLAFLPFEKAFYDKFNVPCRFIGHTMADAIPLKPNRAEACQMLQIDPAQRYLAILVGSRGSEVEFLAEPFLKTALLLKEQFPDLQLLVPLVNEKRRIQFESIKAKIAPNLDLHLIDGNARQAMIAADATLLASGTAALEAMLCKSPMVVGYRMKPLTYFLAKRLVKTDYISLPNLLANEMLVPEMIQEECTPELLAEKLSAYLSDDESAVKNRLVLIQHFTDLHQKIQCNADKQAAQAVIDLLEGKENV.

The protein belongs to the LpxB family.

It catalyses the reaction a lipid X + a UDP-2-N,3-O-bis[(3R)-3-hydroxyacyl]-alpha-D-glucosamine = a lipid A disaccharide + UDP + H(+). Its pathway is bacterial outer membrane biogenesis; LPS lipid A biosynthesis. Condensation of UDP-2,3-diacylglucosamine and 2,3-diacylglucosamine-1-phosphate to form lipid A disaccharide, a precursor of lipid A, a phosphorylated glycolipid that anchors the lipopolysaccharide to the outer membrane of the cell. This is Lipid-A-disaccharide synthase from Haemophilus influenzae (strain PittGG).